The sequence spans 203 residues: Ras-related protein RABG3b (203 aa).

15-22 (GDSGVGKT) contacts GTP. Positions 37 to 45 (YKATIGADF) match the Effector region motif. GTP contacts are provided by residues 63–67 (DTAGQ), 125–128 (NKVD), and 158–159 (SA). S-geranylgeranyl cysteine attachment occurs at residues C201 and C203. C203 bears the Cysteine methyl ester mark.

Belongs to the small GTPase superfamily. Rab family. Interacts with VPS39. In terms of tissue distribution, expressed in xylem cells of inflorescence stems.

It is found in the cell membrane. Its function is as follows. Intracellular vesicle trafficking and protein transport. Functions in autophagy. Involved in xylem and tracheary element differentiation. The sequence is that of Ras-related protein RABG3b (RABG3B) from Arabidopsis thaliana (Mouse-ear cress).